Here is a 358-residue protein sequence, read N- to C-terminus: Pyruvate dehydrogenase E1 component subunit alpha (358 aa).

As to quaternary structure, heterodimer of an alpha and a beta chain. Thiamine diphosphate serves as cofactor.

It catalyses the reaction N(6)-[(R)-lipoyl]-L-lysyl-[protein] + pyruvate + H(+) = N(6)-[(R)-S(8)-acetyldihydrolipoyl]-L-lysyl-[protein] + CO2. The pyruvate dehydrogenase complex catalyzes the overall conversion of pyruvate to acetyl-CoA and CO(2). It contains multiple copies of three enzymatic components: pyruvate dehydrogenase (E1), dihydrolipoamide acetyltransferase (E2) and lipoamide dehydrogenase (E3). This Mycoplasma genitalium (strain ATCC 33530 / DSM 19775 / NCTC 10195 / G37) (Mycoplasmoides genitalium) protein is Pyruvate dehydrogenase E1 component subunit alpha (pdhA).